Here is a 141-residue protein sequence, read N- to C-terminus: Nucleoside diphosphate kinase (141 aa).

ATP is bound by residues Lys-11, Phe-59, Arg-87, Thr-93, Arg-104, and Asn-114. The active-site Pros-phosphohistidine intermediate is His-117.

It belongs to the NDK family. As to quaternary structure, homotetramer. Mg(2+) is required as a cofactor.

Its subcellular location is the cytoplasm. The catalysed reaction is a 2'-deoxyribonucleoside 5'-diphosphate + ATP = a 2'-deoxyribonucleoside 5'-triphosphate + ADP. The enzyme catalyses a ribonucleoside 5'-diphosphate + ATP = a ribonucleoside 5'-triphosphate + ADP. In terms of biological role, major role in the synthesis of nucleoside triphosphates other than ATP. The ATP gamma phosphate is transferred to the NDP beta phosphate via a ping-pong mechanism, using a phosphorylated active-site intermediate. The chain is Nucleoside diphosphate kinase from Serratia proteamaculans (strain 568).